Reading from the N-terminus, the 143-residue chain is Nucleoside diphosphate kinase (143 aa).

ATP-binding residues include Lys11, Phe59, Arg87, Thr93, Arg104, and Asn114. The active-site Pros-phosphohistidine intermediate is His117.

It belongs to the NDK family. Homotetramer. The cofactor is Mg(2+).

It localises to the cytoplasm. It catalyses the reaction a 2'-deoxyribonucleoside 5'-diphosphate + ATP = a 2'-deoxyribonucleoside 5'-triphosphate + ADP. The catalysed reaction is a ribonucleoside 5'-diphosphate + ATP = a ribonucleoside 5'-triphosphate + ADP. In terms of biological role, major role in the synthesis of nucleoside triphosphates other than ATP. The ATP gamma phosphate is transferred to the NDP beta phosphate via a ping-pong mechanism, using a phosphorylated active-site intermediate. This chain is Nucleoside diphosphate kinase, found in Sodalis glossinidius (strain morsitans).